Consider the following 423-residue polypeptide: Vitamin D3 receptor (423 aa).

8 residues coordinate Zn(2+): Cys24, Cys27, Cys41, Cys44, Cys60, Cys66, Cys76, and Cys79. 2 NR C4-type zinc fingers span residues 24 to 44 (CGVC…CEGC) and 60 to 84 (CPFN…LKRC). A DNA-binding region (nuclear receptor) is located at residues 24–89 (CGVCGDRATG…RLKRCVDIGM (66 aa)). A hinge region spans residues 97–126 (DEEVQRKREMIMKRKEEEALKDSLRPKLSE). The region spanning 127–419 (EQQHIIAILL…LTPLVLEVFG (293 aa)) is the NR LBD domain. Tyr143 contacts calcitriol. The segment at 159-180 (MDGSTGSYSPRPTLSFSGNSSS) is disordered. A compositionally biased stretch (low complexity) spans 171–180 (TLSFSGNSSS). Ser233 serves as a coordination point for calcitriol. Positions 242-260 (KMIPGFRDLTSDDQIVLLK) are interaction with coactivator LXXLL motif. Calcitriol is bound by residues Arg270, Ser274, His301, and His393. Positions 412-420 (PLVLEVFGN) match the 9aaTAD motif.

The protein belongs to the nuclear hormone receptor family. NR1 subfamily. Homodimer in the absence of bound vitamin D3. Heterodimer with RXRA after vitamin D3 binding. Interacts with MED1 and NCOA6. Interacts with MED1, NCOA1, NCOA2, NCOA3 and NCOA6 coactivators, leading to a strong increase of transcription of target genes. Interacts with the corepressor NCOR1. Interacts with SNW1. Interacts with IRX4, the interaction does not affect its transactivation activity. Interacts with CRY1. Interacts with CRY2 in a ligand-dependent manner. Post-translationally, ubiquitinated by UBR5, leading to its degradation: UBR5 specifically recognizes and binds ligand-bound VDR when it is not associated with coactivators (NCOAs). In presence of NCOAs, the UBR5-degron is not accessible, preventing its ubiquitination and degradation. In terms of tissue distribution, detected in intestine and kidney.

Its subcellular location is the nucleus. It is found in the cytoplasm. Functionally, nuclear receptor for calcitriol, the active form of vitamin D3 which mediates the action of this vitamin on cells. Enters the nucleus upon vitamin D3 binding where it forms heterodimers with the retinoid X receptor/RXR. The VDR-RXR heterodimers bind to specific response elements on DNA and activate the transcription of vitamin D3-responsive target genes. Plays a central role in calcium homeostasis. Also functions as a receptor for the secondary bile acid lithocholic acid (LCA) and its metabolites. This is Vitamin D3 receptor (Vdr) from Rattus norvegicus (Rat).